The primary structure comprises 73 residues: UPF0346 protein BLi02292/BL01432 (73 aa).

It belongs to the UPF0346 family.

The polypeptide is UPF0346 protein BLi02292/BL01432 (Bacillus licheniformis (strain ATCC 14580 / DSM 13 / JCM 2505 / CCUG 7422 / NBRC 12200 / NCIMB 9375 / NCTC 10341 / NRRL NRS-1264 / Gibson 46)).